The following is a 513-amino-acid chain: Protein CYCLOPS (513 aa).

A disordered region spans residues Q327–K435. Over residues S334–P347 the composition is skewed to low complexity. Polar residues predominate over residues P359–R381. Residues G384–D396 are compositionally biased toward basic and acidic residues. 2 short sequence motifs (nuclear localization signal) span residues R397–R401 and K421–R424. A coiled-coil region spans residues M447 to I513.

It belongs to the CYCLOPS family.

It is found in the nucleus. Functionally, involved symbiotic signaling. Required for root infection by symbiotic rhizobia, infection thread (IT) formation, and nodule development. Required for symbiosome formation (i.e. the release of the bacteria from the ITs) and subsequent symbiosome development. Involved in arbuscular mycorrhizal (AM) symbiosis. The polypeptide is Protein CYCLOPS (Pisum sativum (Garden pea)).